Here is a 691-residue protein sequence, read N- to C-terminus: Glycine--tRNA ligase beta subunit (691 aa).

Belongs to the class-II aminoacyl-tRNA synthetase family. As to quaternary structure, tetramer of two alpha and two beta subunits.

Its subcellular location is the cytoplasm. It carries out the reaction tRNA(Gly) + glycine + ATP = glycyl-tRNA(Gly) + AMP + diphosphate. The protein is Glycine--tRNA ligase beta subunit of Levilactobacillus brevis (strain ATCC 367 / BCRC 12310 / CIP 105137 / JCM 1170 / LMG 11437 / NCIMB 947 / NCTC 947) (Lactobacillus brevis).